Here is a 121-residue protein sequence, read N- to C-terminus: Basic phospholipase A2 F17 (121 aa).

Intrachain disulfides connect Cys25–Cys114, Cys27–Cys43, Cys42–Cys94, Cys48–Cys121, Cys49–Cys87, Cys56–Cys80, and Cys74–Cys85. Residues Tyr26, Gly28, and Gly30 each coordinate Ca(2+). The active site involves His46. Asp47 serves as a coordination point for Ca(2+). Residue Asp88 is part of the active site.

Belongs to the phospholipase A2 family. Group II subfamily. D49 sub-subfamily. As to quaternary structure, when this protein is associated with crotapotin (F5 or F7), it forms the crotoxin protein. Ca(2+) is required as a cofactor. As to expression, expressed by the venom gland.

It localises to the secreted. The enzyme catalyses a 1,2-diacyl-sn-glycero-3-phosphocholine + H2O = a 1-acyl-sn-glycero-3-phosphocholine + a fatty acid + H(+). Activated by heparin. Inhibited by its chaperone crotapotin. Snake venom phospholipase A2 (PLA2) that has anticoagulant activity and inhibits bactericial growth of the Gram-negative bacteria Xanthomonas axonopodis pv. passiflorae (in monomeric form). PLA2 catalyzes the calcium-dependent hydrolysis of the 2-acyl groups in 3-sn-phosphoglycerides. The polypeptide is Basic phospholipase A2 F17 (Crotalus durissus terrificus (South American rattlesnake)).